We begin with the raw amino-acid sequence, 224 residues long: Thiamine-phosphate synthase (224 aa).

4-amino-2-methyl-5-(diphosphooxymethyl)pyrimidine-binding positions include 44–48 and Asn-79; that span reads QFREK. Mg(2+) contacts are provided by Asp-80 and Asp-99. Ser-117 contacts 4-amino-2-methyl-5-(diphosphooxymethyl)pyrimidine. 143 to 145 is a 2-[(2R,5Z)-2-carboxy-4-methylthiazol-5(2H)-ylidene]ethyl phosphate binding site; sequence TET. Lys-146 provides a ligand contact to 4-amino-2-methyl-5-(diphosphooxymethyl)pyrimidine. Residues Gly-175 and 195–196 contribute to the 2-[(2R,5Z)-2-carboxy-4-methylthiazol-5(2H)-ylidene]ethyl phosphate site; that span reads IS.

It belongs to the thiamine-phosphate synthase family. Mg(2+) serves as cofactor.

The catalysed reaction is 2-[(2R,5Z)-2-carboxy-4-methylthiazol-5(2H)-ylidene]ethyl phosphate + 4-amino-2-methyl-5-(diphosphooxymethyl)pyrimidine + 2 H(+) = thiamine phosphate + CO2 + diphosphate. The enzyme catalyses 2-(2-carboxy-4-methylthiazol-5-yl)ethyl phosphate + 4-amino-2-methyl-5-(diphosphooxymethyl)pyrimidine + 2 H(+) = thiamine phosphate + CO2 + diphosphate. It carries out the reaction 4-methyl-5-(2-phosphooxyethyl)-thiazole + 4-amino-2-methyl-5-(diphosphooxymethyl)pyrimidine + H(+) = thiamine phosphate + diphosphate. The protein operates within cofactor biosynthesis; thiamine diphosphate biosynthesis; thiamine phosphate from 4-amino-2-methyl-5-diphosphomethylpyrimidine and 4-methyl-5-(2-phosphoethyl)-thiazole: step 1/1. Condenses 4-methyl-5-(beta-hydroxyethyl)thiazole monophosphate (THZ-P) and 2-methyl-4-amino-5-hydroxymethyl pyrimidine pyrophosphate (HMP-PP) to form thiamine monophosphate (TMP). This Bacillus licheniformis (strain ATCC 14580 / DSM 13 / JCM 2505 / CCUG 7422 / NBRC 12200 / NCIMB 9375 / NCTC 10341 / NRRL NRS-1264 / Gibson 46) protein is Thiamine-phosphate synthase.